The primary structure comprises 176 residues: Large ribosomal subunit protein eL6 (176 aa).

Residues 1–27 (MSQVAPKWYQSEDVPAPKQTRKTARPQ) form a disordered region.

This sequence belongs to the eukaryotic ribosomal protein eL6 family. In terms of assembly, component of the large ribosomal subunit. Mature ribosomes consist of a small (40S) and a large (60S) subunit. The 40S subunit contains about 32 different proteins and 1 molecule of RNA (18S). The 60S subunit contains 45 different proteins and 3 molecules of RNA (25S, 5.8S and 5S).

The protein localises to the cytoplasm. In terms of biological role, component of the ribosome, a large ribonucleoprotein complex responsible for the synthesis of proteins in the cell. The small ribosomal subunit (SSU) binds messenger RNAs (mRNAs) and translates the encoded message by selecting cognate aminoacyl-transfer RNA (tRNA) molecules. The large subunit (LSU) contains the ribosomal catalytic site termed the peptidyl transferase center (PTC), which catalyzes the formation of peptide bonds, thereby polymerizing the amino acids delivered by tRNAs into a polypeptide chain. The nascent polypeptides leave the ribosome through a tunnel in the LSU and interact with protein factors that function in enzymatic processing, targeting, and the membrane insertion of nascent chains at the exit of the ribosomal tunnel. This chain is Large ribosomal subunit protein eL6, found in Candida albicans (strain SC5314 / ATCC MYA-2876) (Yeast).